Here is an 895-residue protein sequence, read N- to C-terminus: Probable LRR receptor-like serine/threonine-protein kinase At5g48740 (895 aa).

A signal peptide spans 1-16; it reads MLFWVLLSSFCVFCFS. Over 17 to 544 the chain is Extracellular; sequence SPDGFLSLSC…INKKQRKQNR (528 aa). N-linked (GlcNAc...) asparagine glycosylation is found at Asn36, Asn50, Asn60, Asn140, Asn195, Asn234, and Asn318. LRR repeat units lie at residues 385 to 407, 408 to 430, 431 to 453, 454 to 477, 478 to 500, and 511 to 532; these read RVTSLFLSKINLRSISPTFGDLL, DLKTLDLHNTSLTGAIQNVGSLK, DLQKLNLSFNQLESFGSELEDLV, NLEVLDLQNNSLQGSVPETLGKLK, KLRLLNLENNNLVGPLPQSLNIT, and CLSFSSISCNNVSSTIDTPQVT. Residues Asn416, Asn436, Asn462, Asn498, and Asn521 are each glycosylated (N-linked (GlcNAc...) asparagine). The helical transmembrane segment at 545–565 threads the bilayer; it reads IAILLGVSGGALFATFLVFVF. Residues 566–895 are Cytoplasmic-facing; the sequence is MSIFTRRQRN…SYLAASAHTD (330 aa). The 283-residue stretch at 606–888 folds into the Protein kinase domain; it reads RNFKEVIGRG…EAYSLQLSYL (283 aa). Residues 612–620 and Lys634 contribute to the ATP site; that span reads IGRGSFGAV. Phosphotyrosine is present on Tyr679. Asp732 acts as the Proton acceptor in catalysis. Position 736 is a phosphoserine (Ser736). Thr767 and Thr772 each carry phosphothreonine. Position 780 is a phosphotyrosine (Tyr780).

This sequence belongs to the protein kinase superfamily. Ser/Thr protein kinase family.

Its subcellular location is the membrane. It catalyses the reaction L-seryl-[protein] + ATP = O-phospho-L-seryl-[protein] + ADP + H(+). The catalysed reaction is L-threonyl-[protein] + ATP = O-phospho-L-threonyl-[protein] + ADP + H(+). This Arabidopsis thaliana (Mouse-ear cress) protein is Probable LRR receptor-like serine/threonine-protein kinase At5g48740.